The chain runs to 340 residues: Flavonoid 7-O-methyltransferase 2 (340 aa).

An S-adenosyl-L-methionine-binding site is contributed by Asp-207. His-245 acts as the Proton acceptor in catalysis.

The protein belongs to the class I-like SAM-binding methyltransferase superfamily. Cation-independent O-methyltransferase family. In terms of assembly, homodimer. As to expression, expressed in leaves.

The catalysed reaction is scutellarein 4'-methyl ether + S-adenosyl-L-methionine = ladanein + S-adenosyl-L-homocysteine. It catalyses the reaction acacetin + S-adenosyl-L-methionine = apigenin 4',7-dimethyl ether + S-adenosyl-L-homocysteine. It carries out the reaction diosmetin + S-adenosyl-L-methionine = luteolin 4',7-dimethyl ether + S-adenosyl-L-homocysteine. The enzyme catalyses chrysoeriol + S-adenosyl-L-methionine = velutin + S-adenosyl-L-homocysteine. The catalysed reaction is (2S)-naringenin + S-adenosyl-L-methionine = (2S)-sakuranetin + S-adenosyl-L-homocysteine + H(+). It catalyses the reaction apigenin + S-adenosyl-L-methionine = genkwanin + S-adenosyl-L-homocysteine + H(+). It carries out the reaction luteolin + S-adenosyl-L-methionine = luteolin 7-methyl ether + S-adenosyl-L-homocysteine + H(+). The enzyme catalyses scutellarein + S-adenosyl-L-methionine = scutellarein 7-methyl ether + S-adenosyl-L-homocysteine. It participates in flavonoid metabolism. Flavonoid 7-O-methyltransferase involved in the biosynthesis of polymethoxylated flavonoids natural products such as nevadensin and salvigenin, aroma compounds which contribute to the flavor of sweet basil, and exhibit pharmacological activities such as anti-allergic, anti-oxidant, antibacterial, anti-proliferative, and anti-inflammatory effects. Catalyzes S-adenosylmethionine-dependent regioselective 7-O-methylation of flavonoids; active on various hydroxylated flavonoid substrates, including apigenin (API) and luteolin (LUT), and, with a lower efficiency, scutellarein (SCU), naringenin (NAR), chrysoeriol (CHRYS), diosmetin (DIOS), acacetin (ACA) and scutellarein-7-methyl ether (SCU7Me). The sequence is that of Flavonoid 7-O-methyltransferase 2 from Ocimum basilicum (Sweet basil).